We begin with the raw amino-acid sequence, 915 residues long: Probable inorganic carbon transporter subunit DabA (915 aa).

Residues cysteine 392, aspartate 394, histidine 566, and cysteine 581 each coordinate Zn(2+).

It belongs to the inorganic carbon transporter (TC 9.A.2) DabA family. In terms of assembly, forms a complex with DabB. Zn(2+) is required as a cofactor.

The protein localises to the cell inner membrane. In terms of biological role, part of an energy-coupled inorganic carbon pump. This chain is Probable inorganic carbon transporter subunit DabA, found in Nitrosospira multiformis (strain ATCC 25196 / NCIMB 11849 / C 71).